A 634-amino-acid chain; its full sequence is uncharacterized protein (634 aa).

Positions 1 to 40 (MWLQQRLKGLPGLLSSSWARRLLCLLGLLLLLLWFGGSGA) are cleaved as a signal peptide. Residues 41 to 589 (RRAAGGLHLL…DEHMAQQDPG (549 aa)) are Extracellular-facing. Residue Asn363 is glycosylated (N-linked (GlcNAc...) asparagine). Residues 590 to 610 (LPFLFWFSVASLITLFHLFLF) form a helical membrane-spanning segment. Topologically, residues 611–634 (KLIYNEYCGPGAKPLFRSKEDPSV) are cytoplasmic.

It localises to the membrane. This is an uncharacterized protein from Homo sapiens (Human).